The chain runs to 188 residues: Scytalone dehydratase (188 aa).

Residues Y27, Y47, and F50 each contribute to the substrate site. Catalysis depends on residues H82 and H107. Residue N128 coordinates substrate.

The protein belongs to the scytalone dehydratase family. As to quaternary structure, homotrimer. Each subunit contains an active site, located in the central part of the hydrophobic core of the monomer, which functions independently.

It is found in the endosome. The enzyme catalyses scytalone = 1,3,8-trihydroxynaphthalene + H2O. It participates in pigment biosynthesis; melanin biosynthesis. Its activity is regulated as follows. Carpropamid acts as an efficient inhibitor of scytalone dehydratase activity. Its function is as follows. Scytalone dehydratase; part of the gene cluster that mediates the biosynthesis of dihydroxynaphthalene (DHN)-melanin, a bluish-green pigment and a structural component of the conidial wall. Within the pathway, catalyzes the dehydration of scytalone as well as of vermelone. The sequence is that of Scytalone dehydratase from Colletotrichum orbiculare (strain 104-T / ATCC 96160 / CBS 514.97 / LARS 414 / MAFF 240422) (Cucumber anthracnose fungus).